The following is a 249-amino-acid chain: Ribosomal RNA small subunit methyltransferase J (249 aa).

Residues 97–98 (RD), 113–114 (ER), and aspartate 167 contribute to the S-adenosyl-L-methionine site.

The protein belongs to the methyltransferase superfamily. RsmJ family.

The protein resides in the cytoplasm. The catalysed reaction is guanosine(1516) in 16S rRNA + S-adenosyl-L-methionine = N(2)-methylguanosine(1516) in 16S rRNA + S-adenosyl-L-homocysteine + H(+). In terms of biological role, specifically methylates the guanosine in position 1516 of 16S rRNA. The protein is Ribosomal RNA small subunit methyltransferase J of Aeromonas salmonicida (strain A449).